Reading from the N-terminus, the 624-residue chain is (-)-beta-phellandrene synthase 3, chloroplastic (624 aa).

A chloroplast-targeting transit peptide spans 1–48; it reads MAIVSSVPLASKSCLHKSLISSIHKLKPFCRTIPTLGMSRPGKYVMPS. Mg(2+)-binding residues include Asp375, Asp379, and Asp527. Residues 375 to 379 carry the DDXXD motif motif; it reads DDMYD.

Belongs to the terpene synthase family. Tpsd subfamily. Mg(2+) serves as cofactor. Mn(2+) is required as a cofactor.

It is found in the plastid. It localises to the chloroplast. The enzyme catalyses (2E)-geranyl diphosphate = (-)-beta-phellandrene + diphosphate. It participates in terpene metabolism; oleoresin biosynthesis. Terpene synthase (TPS) involved in the biosynthesis of monoterpene natural products included in conifer oleoresin secretions and volatile emissions; these compounds contribute to biotic and abiotic stress defense against herbivores and pathogens. Catalyzes the conversion of (2E)-geranyl diphosphate (GPP) to (-)-beta-phellandrene. In Picea sitchensis (Sitka spruce), this protein is (-)-beta-phellandrene synthase 3, chloroplastic.